The following is a 339-amino-acid chain: Transcription factor IIIA (339 aa).

9 C2H2-type zinc fingers span residues 12 to 36, 42 to 66, 72 to 97, 104 to 128, 134 to 158, 161 to 187, 190 to 212, 219 to 244, and 250 to 274; these read FICSFPDCNATYNKNRKLQAHLCKH, FPCTYEGCEKGFVTLHHLNRHVLSH, CKCETENCNLAFTTASNMRLHFKRAH, YVCYFADCGQQFRKHNQLKIHQYIH, FKCSHEGCDKCYASPSRLKRHEKTH, YPCRKDSTCPFVGKTWSDYMKHAAELH, VTCSICNRTFKRKSFLKEHKKIH, YRCPRENCDRTYTTKFNLKSHILTFH, and FVCEHEGCGKTFAMKQSLDRHFNTH. The interval 271 to 339 is disordered; the sequence is FNTHDPEKKK…LPVLENLTLK (69 aa). Residues 299-309 show a composition bias toward basic residues; it reads KPKKSKKKKKP. Residues 311-323 show a composition bias toward polar residues; sequence QTPAMESQEQQPD.

The protein resides in the nucleus. In terms of biological role, involved in ribosomal large subunit biogenesis. Interacts with the internal control region (ICR) of approximately 50 bases within the 5S RNA genes, is required for correct transcription of these genes by RNA polymerase III. Also binds the transcribed 5S RNA's. The sequence is that of Transcription factor IIIA (gtf3a) from Anaxyrus americanus (American toad).